We begin with the raw amino-acid sequence, 364 residues long: Long-wave-sensitive opsin 1 (364 aa).

Residues 1-52 (MAHTWGPQRLAGGQPQANFEESTQGSIFTYTNSNSTRDPFEGPNYHIAPRWV) are Extracellular-facing. Ser22 carries O-linked (GlcNAc) serine glycosylation. N-linked (GlcNAc...) asparagine glycosylation is present at Asn34. The chain crosses the membrane as a helical span at residues 53-77 (YHLTSAWMVFVVIASVFTNGLVLAA). Over 78 to 89 (TMRFKKLRHPLN) the chain is Cytoplasmic. Residues 90-115 (WILVNLAIADLAETIIASTISVVNQM) form a helical membrane-spanning segment. At 116–129 (YGYFVLGHPLCVVE) the chain is on the extracellular side. Cys126 and Cys203 are oxidised to a cystine. Residues 130 to 149 (GYTVSLCGITGLWSLAIISW) form a helical membrane-spanning segment. The Cytoplasmic portion of the chain corresponds to 150-168 (ERWMVVCKPFGNVRFDAKL). The helical transmembrane segment at 169 to 192 (ATAGIAFSWIWAAVWTAPPIFGWS) threads the bilayer. Residues 193–218 (RYWPHGLKTSCGPDVFSGSSYPGVQS) are Extracellular-facing. The helical transmembrane segment at 219–246 (YMIVLMITCCFIPLSVIILCYLQVWLAI) threads the bilayer. Residues 247 to 268 (RAVAKQQKESESTQKAEKEVTR) are Cytoplasmic-facing. The helical transmembrane segment at 269–292 (MVMVMIFAYCLCWGPYTFFACFAA) threads the bilayer. Topologically, residues 293–300 (AHPGYAFH) are extracellular. A helical membrane pass occupies residues 301 to 325 (PLVAALPAYFAKSATIYNPIIYVFM). Lys312 is subject to N6-(retinylidene)lysine. Topologically, residues 326 to 364 (NRQFRNCILQLFGKKVDDSSELSSVSKTEASSVSSVSPA) are cytoplasmic.

This sequence belongs to the G-protein coupled receptor 1 family. Opsin subfamily. Phosphorylated on some or all of the serine and threonine residues present in the C-terminal region. In terms of tissue distribution, the three color pigments are found in the cone photoreceptor cells.

It is found in the membrane. Visual pigments are the light-absorbing molecules that mediate vision. They consist of an apoprotein, opsin, covalently linked to cis-retinal. This Capra hircus (Goat) protein is Long-wave-sensitive opsin 1 (OPN1LW).